Consider the following 137-residue polypeptide: Large ribosomal subunit protein uL16 (137 aa).

Residues 1 to 19 (MLSPKKVKFRKQQRGRRTG) show a composition bias toward basic residues. The tract at residues 1–20 (MLSPKKVKFRKQQRGRRTGT) is disordered.

It belongs to the universal ribosomal protein uL16 family. As to quaternary structure, part of the 50S ribosomal subunit.

Functionally, binds 23S rRNA and is also seen to make contacts with the A and possibly P site tRNAs. The chain is Large ribosomal subunit protein uL16 from Desulfosudis oleivorans (strain DSM 6200 / JCM 39069 / Hxd3) (Desulfococcus oleovorans).